The sequence spans 360 residues: SPRY domain-containing SOCS box protein 3 (360 aa).

Residues 20–55 (RDQDARSPTLPAEEEAWGYDSDGQHSNSDSDTDLLH) form a disordered region. Positions 85–274 (LHTFHQIKSC…MKVIRSCCCR (190 aa)) constitute a B30.2/SPRY domain. Residues 264–315 (SMKVIRSCCCRTSLQYLCCARLRQLLPDSVDSLEVLPLPPGLKQVLGNKLGW) form the SOCS box domain. A disordered region spans residues 323 to 350 (RSNQHKGDTSATTSCGSDSDSSCTPGQD). Low complexity predominate over residues 331 to 346 (TSATTSCGSDSDSSCT).

Belongs to the SPSB family. As to quaternary structure, substrate-recognition component of the ECS(SPSB3) complex, composed of spsb3, cul5, elob, elob and rnf7/rbx2.

Its subcellular location is the nucleus. The protein operates within protein modification; protein ubiquitination. Functionally, substrate-recognition component of a cullin-5-RING E3 ubiquitin-protein ligase complex (ECS complex, also named CRL5 complex), which mediates the ubiquitination and subsequent proteasomal degradation of target proteins. This Xenopus tropicalis (Western clawed frog) protein is SPRY domain-containing SOCS box protein 3 (spsb3).